Consider the following 829-residue polypeptide: Protein SEY1 homolog 2 (829 aa).

The tract at residues methionine 1–proline 21 is disordered. At methionine 1 to glutamine 728 the chain is on the cytoplasmic side. Positions glycine 83–proline 305 constitute a GB1/RHD3-type G domain. Glycine 93–serine 100 is a GTP binding site. Coiled-coil stretches lie at residues lysine 372 to serine 396 and aspartate 576 to leucine 596. The helical transmembrane segment at isoleucine 729–leucine 749 threads the bilayer. Over threonine 750–proline 752 the chain is Lumenal. Residues leucine 753 to leucine 773 form a helical membrane-spanning segment. Residues glycine 774–lysine 829 are Cytoplasmic-facing.

This sequence belongs to the TRAFAC class dynamin-like GTPase superfamily. GB1/RHD3 GTPase family. RHD3 subfamily.

It is found in the endoplasmic reticulum membrane. Functionally, probable GTP-binding protein that may be involved in cell development. The polypeptide is Protein SEY1 homolog 2 (Entamoeba dispar (strain ATCC PRA-260 / SAW760)).